The following is a 352-amino-acid chain: uncharacterized protein (352 aa).

An N-terminal signal peptide occupies residues 1 to 22 (MAIYLDKLKMPIIIGLIVLIIA).

This sequence belongs to the bacterial solute-binding protein 1 family. WtpA subfamily.

This is an uncharacterized protein from Staphylothermus marinus (strain ATCC 43588 / DSM 3639 / JCM 9404 / F1).